A 197-amino-acid chain; its full sequence is Phospholipid hydroperoxide glutathione peroxidase (197 aa).

Position 40 is a phosphoserine (serine 40). Selenocysteine 73 is an active-site residue. Selenocysteine 73 is a non-standard amino acid (selenocysteine).

The protein belongs to the glutathione peroxidase family. Monomer. Has a tendency to form higher mass oligomers. Interacts with FUNDC1; this interaction promotes GPX4 recruitment into mitochondria through TOM/TIM complex where it is degraded by mitophagy.

The protein localises to the mitochondrion. It localises to the cytoplasm. The enzyme catalyses a hydroperoxy polyunsaturated fatty acid + 2 glutathione = a hydroxy polyunsaturated fatty acid + glutathione disulfide + H2O. It carries out the reaction (12S)-hydroperoxy-(5Z,8Z,10E,14Z)-eicosatetraenoate + 2 glutathione = (12S)-hydroxy-(5Z,8Z,10E,14Z)-eicosatetraenoate + glutathione disulfide + H2O. It catalyses the reaction (13S)-hydroperoxy-(9Z,11E)-octadecadienoate + 2 glutathione = (13S)-hydroxy-(9Z,11E)-octadecadienoate + glutathione disulfide + H2O. Functionally, essential antioxidant peroxidase that directly reduces phospholipid hydroperoxide even if they are incorporated in membranes and lipoproteins. Can also reduce fatty acid hydroperoxide, cholesterol hydroperoxide and thymine hydroperoxide. Plays a key role in protecting cells from oxidative damage by preventing membrane lipid peroxidation. Required to prevent cells from ferroptosis, a non-apoptotic cell death resulting from an iron-dependent accumulation of lipid reactive oxygen species. The presence of selenocysteine (Sec) versus Cys at the active site is essential for life: it provides resistance to overoxidation and prevents cells against ferroptosis. The presence of Sec at the active site is also essential for the survival of a specific type of parvalbumin-positive interneurons, thereby preventing against fatal epileptic seizures. May be required to protect cells from the toxicity of ingested lipid hydroperoxides. Required for normal sperm development and male fertility. Essential for maturation and survival of photoreceptor cells. Plays a role in a primary T-cell response to viral and parasitic infection by protecting T-cells from ferroptosis and by supporting T-cell expansion. Plays a role of glutathione peroxidase in platelets in the arachidonic acid metabolism. Reduces hydroperoxy ester lipids formed by a 15-lipoxygenase that may play a role as down-regulator of the cellular 15-lipoxygenase pathway. The protein is Phospholipid hydroperoxide glutathione peroxidase of Sapajus apella (Brown-capped capuchin).